The following is a 442-amino-acid chain: tRNA modification GTPase MnmE (442 aa).

Residues Arg27, Glu84, and Lys124 each contribute to the (6S)-5-formyl-5,6,7,8-tetrahydrofolate site. The TrmE-type G domain maps to 221-366 (GLHVVIVGAP…LLDALQAFAE (146 aa)). GTP-binding positions include 231-236 (NAGKSS), 250-256 (SEEAGTT), and 275-278 (DTAG). Mg(2+)-binding residues include Ser235 and Thr256. Lys442 lines the (6S)-5-formyl-5,6,7,8-tetrahydrofolate pocket.

Belongs to the TRAFAC class TrmE-Era-EngA-EngB-Septin-like GTPase superfamily. TrmE GTPase family. As to quaternary structure, homodimer. Heterotetramer of two MnmE and two MnmG subunits. The cofactor is K(+).

It localises to the cytoplasm. Its function is as follows. Exhibits a very high intrinsic GTPase hydrolysis rate. Involved in the addition of a carboxymethylaminomethyl (cmnm) group at the wobble position (U34) of certain tRNAs, forming tRNA-cmnm(5)s(2)U34. This chain is tRNA modification GTPase MnmE, found in Brucella abortus (strain 2308).